Here is a 449-residue protein sequence, read N- to C-terminus: UDP-N-acetylmuramate--L-alanine ligase (449 aa).

Residue 113-119 participates in ATP binding; the sequence is GSHGKTT.

Belongs to the MurCDEF family.

Its subcellular location is the cytoplasm. It carries out the reaction UDP-N-acetyl-alpha-D-muramate + L-alanine + ATP = UDP-N-acetyl-alpha-D-muramoyl-L-alanine + ADP + phosphate + H(+). The protein operates within cell wall biogenesis; peptidoglycan biosynthesis. In terms of biological role, cell wall formation. This chain is UDP-N-acetylmuramate--L-alanine ligase, found in Hydrogenobaculum sp. (strain Y04AAS1).